The sequence spans 465 residues: GTPase Der (465 aa).

2 EngA-type G domains span residues 3–167 (PLVA…PERG) and 179–352 (IHIA…VSAL). Residues 9–16 (GRPNVGKS), 57–61 (DTGGM), 119–122 (NKID), 185–192 (GRPNVGKS), 232–236 (DTAGL), and 297–300 (NKWD) each bind GTP. The region spanning 353 to 437 (RQFSTSEVNK…PVRFLFREGD (85 aa)) is the KH-like domain.

The protein belongs to the TRAFAC class TrmE-Era-EngA-EngB-Septin-like GTPase superfamily. EngA (Der) GTPase family. Associates with the 50S ribosomal subunit.

In terms of biological role, GTPase that plays an essential role in the late steps of ribosome biogenesis. The protein is GTPase Der of Xylella fastidiosa (strain 9a5c).